We begin with the raw amino-acid sequence, 204 residues long: Elongation factor Ts (204 aa).

The tract at residues 80–83 (TDFV) is involved in Mg(2+) ion dislocation from EF-Tu.

Belongs to the EF-Ts family.

It localises to the cytoplasm. Functionally, associates with the EF-Tu.GDP complex and induces the exchange of GDP to GTP. It remains bound to the aminoacyl-tRNA.EF-Tu.GTP complex up to the GTP hydrolysis stage on the ribosome. The chain is Elongation factor Ts from Caldicellulosiruptor bescii (strain ATCC BAA-1888 / DSM 6725 / KCTC 15123 / Z-1320) (Anaerocellum thermophilum).